We begin with the raw amino-acid sequence, 303 residues long: Cytidine deaminase (303 aa).

CMP/dCMP-type deaminase domains are found at residues 57–172 (TDKE…YLPD) and 196–303 (ITED…IQVS). 98–100 (NQE) provides a ligand contact to substrate. His-111 is a Zn(2+) binding site. The active-site Proton donor is Glu-113. Cys-138 and Cys-141 together coordinate Zn(2+).

The protein belongs to the cytidine and deoxycytidylate deaminase family. In terms of assembly, homodimer. Zn(2+) serves as cofactor.

It catalyses the reaction cytidine + H2O + H(+) = uridine + NH4(+). It carries out the reaction 2'-deoxycytidine + H2O + H(+) = 2'-deoxyuridine + NH4(+). Its function is as follows. This enzyme scavenges exogenous and endogenous cytidine and 2'-deoxycytidine for UMP synthesis. This chain is Cytidine deaminase, found in Histophilus somni (strain 2336) (Haemophilus somnus).